The chain runs to 156 residues: SPbeta prophage-derived uncharacterized protein YorH (156 aa).

The chain is SPbeta prophage-derived uncharacterized protein YorH (yorH) from Bacillus subtilis (strain 168).